Consider the following 89-residue polypeptide: Small ribosomal subunit protein uS15 (89 aa).

Belongs to the universal ribosomal protein uS15 family. In terms of assembly, part of the 30S ribosomal subunit. Forms a bridge to the 50S subunit in the 70S ribosome, contacting the 23S rRNA.

Functionally, one of the primary rRNA binding proteins, it binds directly to 16S rRNA where it helps nucleate assembly of the platform of the 30S subunit by binding and bridging several RNA helices of the 16S rRNA. Its function is as follows. Forms an intersubunit bridge (bridge B4) with the 23S rRNA of the 50S subunit in the ribosome. The chain is Small ribosomal subunit protein uS15 from Shewanella woodyi (strain ATCC 51908 / MS32).